Consider the following 356-residue polypeptide: DNA-directed RNA polymerase subunit alpha (356 aa).

Positions 1-230 (MNLHRISSEP…DLLKPLLKVE (230 aa)) are alpha N-terminal domain (alpha-NTD). Residues 267-356 (IDQPLLPADS…IRKSYGHILG (90 aa)) are alpha C-terminal domain (alpha-CTD).

The protein belongs to the RNA polymerase alpha chain family. As to quaternary structure, in plastids the minimal PEP RNA polymerase catalytic core is composed of four subunits: alpha, beta, beta', and beta''. When a (nuclear-encoded) sigma factor is associated with the core the holoenzyme is formed, which can initiate transcription.

It localises to the plastid. The protein localises to the chloroplast. It catalyses the reaction RNA(n) + a ribonucleoside 5'-triphosphate = RNA(n+1) + diphosphate. DNA-dependent RNA polymerase catalyzes the transcription of DNA into RNA using the four ribonucleoside triphosphates as substrates. The polypeptide is DNA-directed RNA polymerase subunit alpha (Zygnema circumcarinatum (Green alga)).